A 175-amino-acid chain; its full sequence is Thioredoxin M-type, chloroplastic (175 aa).

A chloroplast-targeting transit peptide spans 1–62 (MALETCLRGW…ARRPSRFVCK (62 aa)). In terms of domain architecture, Thioredoxin spans 63–174 (CKNVVDEVIV…LCTIIDKYIG (112 aa)). The cysteines at positions 98 and 101 are disulfide-linked.

This sequence belongs to the thioredoxin family. Plant M-type subfamily. Forms a complex with heterodimeric ferredoxin-thioredoxin reductase (FTR) and ferredoxin.

The protein resides in the plastid. It is found in the chloroplast. Its function is as follows. Participates in various redox reactions through the reversible oxidation of the active center dithiol to a disulfide. The M form is known to activate NADP-malate dehydrogenase. The sequence is that of Thioredoxin M-type, chloroplastic from Triticum aestivum (Wheat).